Consider the following 303-residue polypeptide: Aspartate carbamoyltransferase catalytic subunit (303 aa).

The carbamoyl phosphate site is built by R49 and T50. K77 is an L-aspartate binding site. Positions 99, 126, and 129 each coordinate carbamoyl phosphate. L-aspartate contacts are provided by R159 and R211. The carbamoyl phosphate site is built by S252 and P253.

The protein belongs to the aspartate/ornithine carbamoyltransferase superfamily. ATCase family. As to quaternary structure, heterododecamer (2C3:3R2) of six catalytic PyrB chains organized as two trimers (C3), and six regulatory PyrI chains organized as three dimers (R2).

It carries out the reaction carbamoyl phosphate + L-aspartate = N-carbamoyl-L-aspartate + phosphate + H(+). It participates in pyrimidine metabolism; UMP biosynthesis via de novo pathway; (S)-dihydroorotate from bicarbonate: step 2/3. Catalyzes the condensation of carbamoyl phosphate and aspartate to form carbamoyl aspartate and inorganic phosphate, the committed step in the de novo pyrimidine nucleotide biosynthesis pathway. The protein is Aspartate carbamoyltransferase catalytic subunit of Listeria monocytogenes serovar 1/2a (strain ATCC BAA-679 / EGD-e).